The chain runs to 155 residues: MAEGETTTFRALTEKFNLPLGNYKKPKLLYCSNGGYFLRILPDGRVDGTKDRSDQHIQLQLYAESIGEVYIKSTETGQFLAMDTNGLLYGSQTPSEECLFLERLEENHYNTYISKKHAEKNWFIGLKKNGSSKLGPRTHFGQKAILFLPLPVSSD.

Residue A2 is modified to N-acetylalanine. The propeptide occupies A2 to K15. N33 is a heparin binding site. Positions K127–K143 are heparin-binding.

It belongs to the heparin-binding growth factors family. As to quaternary structure, monomer. Homodimer. Interacts with FGFR1, FGFR2, FGFR3 and FGFR4. Affinity between fibroblast growth factors (FGFs) and their receptors is increased by heparan sulfate glycosaminoglycans that function as coreceptors. Found in a complex with FGFBP1, FGF1 and FGF2. Interacts with FGFBP1. Part of a Cu(2+)-dependent multiprotein aggregate containing FGF1, S100A13 and SYT1. Interacts with SYT1. Interacts with S100A13. Interacts with LRRC59. Interacts with CSNKA, CSNKB and FIBP. While binding with LRRC59, CSNKA and FIBP seem mutually exclusive, CSNKB and FIBP may cooperatively interact with FGF1. Forms a ternary complex with FGFR1 and ITGAV:ITGB3 and induces the recruitment of PTPN11 to the complex. Post-translationally, in the nucleus, phosphorylated by PKC/PRKCD.

Its subcellular location is the secreted. The protein localises to the cytoplasm. It is found in the cell cortex. It localises to the cytosol. The protein resides in the nucleus. Its function is as follows. Plays an important role in the regulation of cell survival, cell division, angiogenesis, cell differentiation and cell migration. Functions as a potent mitogen in vitro. Acts as a ligand for FGFR1 and integrins. Binds to FGFR1 in the presence of heparin leading to FGFR1 dimerization and activation via sequential autophosphorylation on tyrosine residues which act as docking sites for interacting proteins, leading to the activation of several signaling cascades. Binds to integrin ITGAV:ITGB3. Its binding to integrin, subsequent ternary complex formation with integrin and FGFR1, and the recruitment of PTPN11 to the complex are essential for FGF1 signaling. Induces the phosphorylation and activation of FGFR1, FRS2, MAPK3/ERK1, MAPK1/ERK2 and AKT1. Can induce angiogenesis. The sequence is that of Fibroblast growth factor 1 (FGF1) from Ovis aries (Sheep).